A 255-amino-acid chain; its full sequence is Taurine import ATP-binding protein TauB (255 aa).

One can recognise an ABC transporter domain in the interval 2–229 (LQISHLYADY…RFVAGESSRS (228 aa)). An ATP-binding site is contributed by 34-41 (GPSGCGKT).

The protein belongs to the ABC transporter superfamily. Taurine importer (TC 3.A.1.17.1) family. The complex is composed of two ATP-binding proteins (TauB), two transmembrane proteins (TauC) and a solute-binding protein (TauA).

The protein localises to the cell inner membrane. The enzyme catalyses taurine(out) + ATP + H2O = taurine(in) + ADP + phosphate + H(+). Its function is as follows. Part of the ABC transporter complex TauABC involved in taurine import. Responsible for energy coupling to the transport system. The protein is Taurine import ATP-binding protein TauB of Shigella flexneri serotype 5b (strain 8401).